We begin with the raw amino-acid sequence, 479 residues long: NADH oxidase (479 aa).

FAD-binding positions include 8 to 12, aspartate 33, cysteine 43, valine 80, 111 to 114, lysine 149, and tyrosine 177; these read GVNHA and ASGA. Histidine 11 serves as the catalytic Proton acceptor. Cysteine 43 serves as the catalytic Redox-active. The residue at position 43 (cysteine 43) is a Cysteine sulfinic acid (-SO2H). NAD(+) contacts are provided by residues 170–185, aspartate 197, and glycine 264; that span reads VAIV…LAEA. Residues 295–305, leucine 322, alanine 323, and threonine 324 each bind FAD; that span reads LNHENVYVIGG. Alanine 353 contributes to the NAD(+) binding site. An FAD-binding site is contributed by phenylalanine 450.

This sequence belongs to the class-III pyridine nucleotide-disulfide oxidoreductase family. Requires FAD as cofactor.

The catalysed reaction is 2 NADH + O2 + 2 H(+) = 2 NAD(+) + 2 H2O. Functionally, catalyzes the four-electron reduction of molecular oxygen to water. The chain is NADH oxidase (nox) from Mycoplasma pneumoniae (strain ATCC 29342 / M129 / Subtype 1) (Mycoplasmoides pneumoniae).